A 265-amino-acid polypeptide reads, in one-letter code: Phosphonates import ATP-binding protein PhnC 1 (265 aa).

An ABC transporter domain is found at 3 to 247 (LRLSGIELRH…HLDTLYANEQ (245 aa)). 36–43 (GPSGAGKT) lines the ATP pocket. The segment at 245–265 (NEQLSPQPAPDVSETPWTPRC) is disordered.

Belongs to the ABC transporter superfamily. Phosphonates importer (TC 3.A.1.9.1) family. As to quaternary structure, the complex is composed of two ATP-binding proteins (PhnC), two transmembrane proteins (PhnE) and a solute-binding protein (PhnD).

Its subcellular location is the cell inner membrane. It catalyses the reaction phosphonate(out) + ATP + H2O = phosphonate(in) + ADP + phosphate + H(+). Its function is as follows. Part of the ABC transporter complex PhnCDE involved in phosphonates import. Responsible for energy coupling to the transport system. This chain is Phosphonates import ATP-binding protein PhnC 1, found in Pseudomonas savastanoi pv. phaseolicola (strain 1448A / Race 6) (Pseudomonas syringae pv. phaseolicola (strain 1448A / Race 6)).